The following is a 958-amino-acid chain: UvrABC system protein A (958 aa).

The region spanning 1–232 is the ABC transporter 1 domain; sequence MQSKSIKIQG…IETALKLGEG (232 aa). 33-40 contacts ATP; the sequence is GLSGSGKS. The C4-type zinc-finger motif lies at 252–279; it reads CPICGFSIGELEPRLFSFNSPFGACPSC. ABC transporter domains lie at 315–593 and 604–935; these read QYYP…KYLS and RRKP…GKYL. Position 639–646 (639–646) interacts with ATP; it reads GVSGSGKS. Residues 738 to 764 form a C4-type zinc finger; it reads CEACRGDGILKIEMHFLPDVYVPCEVC.

The protein belongs to the ABC transporter superfamily. UvrA family. In terms of assembly, forms a heterotetramer with UvrB during the search for lesions.

Its subcellular location is the cytoplasm. The UvrABC repair system catalyzes the recognition and processing of DNA lesions. UvrA is an ATPase and a DNA-binding protein. A damage recognition complex composed of 2 UvrA and 2 UvrB subunits scans DNA for abnormalities. When the presence of a lesion has been verified by UvrB, the UvrA molecules dissociate. This chain is UvrABC system protein A, found in Oceanobacillus iheyensis (strain DSM 14371 / CIP 107618 / JCM 11309 / KCTC 3954 / HTE831).